A 338-amino-acid chain; its full sequence is Nucleoid-associated protein PA14_59050 (338 aa).

It belongs to the YejK family.

It localises to the cytoplasm. The protein localises to the nucleoid. This Pseudomonas aeruginosa (strain UCBPP-PA14) protein is Nucleoid-associated protein PA14_59050.